The primary structure comprises 122 residues: Serum amyloid A-2 protein (122 aa).

The first 19 residues, 1-19 (MKLLTSLVFCSLLLGVCHG), serve as a signal peptide directing secretion. Residues 89-108 (RGHEDTMADQEANRHGRSGK) show a composition bias toward basic and acidic residues. The disordered stretch occupies residues 89–122 (RGHEDTMADQEANRHGRSGKDPNYYRPPGLPAKY).

Belongs to the SAA family. As to quaternary structure, apolipoprotein of the HDL complex. In terms of tissue distribution, expressed by the liver; secreted in plasma.

The protein localises to the secreted. Its function is as follows. Major acute phase reactant. This is Serum amyloid A-2 protein from Mus musculus (Mouse).